Reading from the N-terminus, the 411-residue chain is tRNA (guanine(37)-N(1))-methyltransferase (411 aa).

Residues histidine 216, 254–255 (DL), 282–283 (DG), and asparagine 303 contribute to the S-adenosyl-L-methionine site. The tract at residues 391–411 (ERQASKQDDPKRRKVAAENAA) is disordered.

This sequence belongs to the class I-like SAM-binding methyltransferase superfamily. TRM5/TYW2 family. In terms of assembly, monomer.

It is found in the mitochondrion matrix. The protein localises to the nucleus. The protein resides in the cytoplasm. It carries out the reaction guanosine(37) in tRNA + S-adenosyl-L-methionine = N(1)-methylguanosine(37) in tRNA + S-adenosyl-L-homocysteine + H(+). Specifically methylates the N1 position of guanosine-37 in various cytoplasmic and mitochondrial tRNAs. Methylation is not dependent on the nature of the nucleoside 5' of the target nucleoside. This is the first step in the biosynthesis of wybutosine (yW), a modified base adjacent to the anticodon of tRNAs and required for accurate decoding. This Phytophthora infestans (strain T30-4) (Potato late blight agent) protein is tRNA (guanine(37)-N(1))-methyltransferase.